The following is a 233-amino-acid chain: Small ribosomal subunit protein uS5 (233 aa).

Over residues 1–13 (MAEETQNTVATES) the composition is skewed to polar residues. Residues 1–40 (MAEETQNTVATESNNEDRKGRRGQRGEGRRGERRNRREEN) are disordered. The segment covering 15–40 (NEDRKGRRGQRGEGRRGERRNRREEN) has biased composition (basic and acidic residues). Residues 45 to 108 (LLDRVVTINR…LDAKKHMFSV (64 aa)) enclose the S5 DRBM domain.

The protein belongs to the universal ribosomal protein uS5 family. As to quaternary structure, part of the 30S ribosomal subunit. Contacts proteins S4 and S8.

In terms of biological role, with S4 and S12 plays an important role in translational accuracy. Located at the back of the 30S subunit body where it stabilizes the conformation of the head with respect to the body. This is Small ribosomal subunit protein uS5 from Bifidobacterium longum (strain NCC 2705).